The primary structure comprises 213 residues: N-(5'-phosphoribosyl)anthranilate isomerase (213 aa).

It belongs to the TrpF family.

The enzyme catalyses N-(5-phospho-beta-D-ribosyl)anthranilate = 1-(2-carboxyphenylamino)-1-deoxy-D-ribulose 5-phosphate. Its pathway is amino-acid biosynthesis; L-tryptophan biosynthesis; L-tryptophan from chorismate: step 3/5. The protein is N-(5'-phosphoribosyl)anthranilate isomerase of Roseiflexus sp. (strain RS-1).